The sequence spans 257 residues: UPF0246 protein BF4021 (257 aa).

This sequence belongs to the UPF0246 family.

The protein is UPF0246 protein BF4021 of Bacteroides fragilis (strain YCH46).